A 403-amino-acid polypeptide reads, in one-letter code: Na(+)/H(+) antiporter NhaH (403 aa).

Residues 1-6 (MHGFHD) are Cytoplasmic-facing. The helical transmembrane segment at 7 to 27 (VFIQILLLLAISVSVIAIAKL) threads the bilayer. Residues 28–30 (LKE) are Extracellular-facing. The helical transmembrane segment at 31–51 (PDSIALVLVGLVLGLTELPII) threads the bilayer. The Cytoplasmic segment spans residues 52 to 65 (EDAERYITQSEVFQ). A helical transmembrane segment spans residues 66–86 (ATIISLFLPILLGDATLKLPF). At 87–98 (HHLFSQKKTVLG) the chain is on the extracellular side. Residues 99–119 (LAFVGTFVSSICIGTAAYFLL) form a helical membrane-spanning segment. At 120–124 (DLPLA) the chain is on the cytoplasmic side. The helical transmembrane segment at 125–145 (VAFTFAALMSATDPISVLSIF) threads the bilayer. Over 146–167 (KSLGVPQKMSTVMEGESLFNDG) the chain is Extracellular. Residues 168–188 (IAVVLFKIASIYLLTYMEMGW) traverse the membrane as a helical segment. Topologically, residues 189-195 (AGLGSGV) are cytoplasmic. The helical transmembrane segment at 196–216 (FLFLKFAIGGALVGLVLGYFF) threads the bilayer. At 217–218 (SQ) the chain is on the extracellular side. A helical transmembrane segment spans residues 219–239 (VIRVFDDYPLEVAFSALLFFG). Over 240–241 (SY) the chain is Cytoplasmic. Residues 242 to 262 (FIAEHFHTSGVIAVVVGGFVF) form a helical membrane-spanning segment. Topologically, residues 263–281 (GDYGAKIGMSKETKTNINT) are extracellular. Residues 282-302 (FWDSVTLIANALIFLMVGLEI) form a helical membrane-spanning segment. Topologically, residues 303-310 (RNIDLAGN) are cytoplasmic. Residues 311 to 331 (WGVIVGAILIVLVGRTIAVYL) traverse the membrane as a helical segment. Residues 332-372 (GTGWVQELSSKERLLINWGGLRGSLSVALALSLPMDFAGRD) are Extracellular-facing. The helical transmembrane segment at 373-393 (QVLLLTFSVVLFSLIVQGLTL) threads the bilayer. The Cytoplasmic segment spans residues 394 to 403 (KPLIKKLGMI).

Belongs to the monovalent cation:proton antiporter 1 (CPA1) transporter (TC 2.A.36) family.

Its subcellular location is the cell membrane. Its function is as follows. Na(+)/H(+) antiporter that extrudes sodium in exchange for external protons. Can also transport lithium. This Halobacillus dabanensis protein is Na(+)/H(+) antiporter NhaH (nhaH).